The primary structure comprises 240 residues: ATP-dependent dethiobiotin synthetase BioD (240 aa).

Glutamate 15–phenylalanine 20 provides a ligand contact to ATP. Threonine 19 is a binding site for Mg(2+). The active site involves lysine 40. Residues aspartate 57, glutamate 118–glycine 121, and asparagine 178–arginine 179 contribute to the ATP site. Mg(2+) contacts are provided by aspartate 57 and glutamate 118.

It belongs to the dethiobiotin synthetase family. As to quaternary structure, homodimer. The cofactor is Mg(2+).

It localises to the cytoplasm. The enzyme catalyses (7R,8S)-7,8-diammoniononanoate + CO2 + ATP = (4R,5S)-dethiobiotin + ADP + phosphate + 3 H(+). It functions in the pathway cofactor biosynthesis; biotin biosynthesis; biotin from 7,8-diaminononanoate: step 1/2. Functionally, catalyzes a mechanistically unusual reaction, the ATP-dependent insertion of CO2 between the N7 and N8 nitrogen atoms of 7,8-diaminopelargonic acid (DAPA, also called 7,8-diammoniononanoate) to form a ureido ring. The sequence is that of ATP-dependent dethiobiotin synthetase BioD from Burkholderia mallei (strain NCTC 10247).